Consider the following 792-residue polypeptide: Probable CoA-transferase Rv1866 (792 aa).

The active-site Nucleophile is the aspartate 558.

This sequence belongs to the CoA-transferase III family.

In terms of biological role, probable CoA-transferase. The protein is Probable CoA-transferase Rv1866 of Mycobacterium tuberculosis (strain ATCC 25618 / H37Rv).